Here is a 653-residue protein sequence, read N- to C-terminus: Multidomain regulatory protein MT1410 (653 aa).

The PAC domain maps to Ser86 to Ala142. Residues Asp177 to Arg396 enclose the PPM-type phosphatase domain. 4 residues coordinate Mn(2+): Asp211, Val212, Asp328, and Asp387. The interval Arg397–Gln544 is anti-sigma factor kinase region. Residues Ile546 to Glu653 enclose the STAS domain. Ser600 is modified (phosphoserine).

The cofactor is Mg(2+). Requires Mn(2+) as cofactor. In terms of processing, autophosphorylated.

The enzyme catalyses O-phospho-L-seryl-[protein] + H2O = L-seryl-[protein] + phosphate. It catalyses the reaction O-phospho-L-threonyl-[protein] + H2O = L-threonyl-[protein] + phosphate. The catalysed reaction is L-seryl-[protein] + ATP = O-phospho-L-seryl-[protein] + ADP + H(+). It carries out the reaction L-threonyl-[protein] + ATP = O-phospho-L-threonyl-[protein] + ADP + H(+). In terms of biological role, primarily acts as an independent SigF regulator that is sensitive to the osmosensory signal, mediating the cross talk of PknD with the SigF regulon. Possesses both phosphatase and kinase activities. The kinase domain functions as a classic anti-sigma factor-like kinase to phosphorylate the anti-anti-sigma factor domain at the canonical regulatory site, and the phosphatase domain antagonizes this activity. This is Multidomain regulatory protein MT1410 from Mycobacterium tuberculosis (strain CDC 1551 / Oshkosh).